Here is a 461-residue protein sequence, read N- to C-terminus: Bifunctional protein GlmU (461 aa).

The pyrophosphorylase stretch occupies residues 1-232 (MNLQIIILAA…SFEVQGINNR (232 aa)). UDP-N-acetyl-alpha-D-glucosamine contacts are provided by residues 8-11 (LAAG), lysine 22, glutamine 73, and 78-79 (GT). A Mg(2+)-binding site is contributed by aspartate 102. Residues glycine 142, glutamate 157, and asparagine 230 each contribute to the UDP-N-acetyl-alpha-D-glucosamine site. Mg(2+) is bound at residue asparagine 230. Positions 233–253 (QQLQQLERTWQQRAANQLMEK) are linker. Positions 254 to 461 (GATLADANRF…WKRPVKRERD (208 aa)) are N-acetyltransferase. Positions 336 and 354 each coordinate UDP-N-acetyl-alpha-D-glucosamine. Catalysis depends on histidine 366, which acts as the Proton acceptor. UDP-N-acetyl-alpha-D-glucosamine contacts are provided by tyrosine 369 and asparagine 380. Acetyl-CoA-binding positions include alanine 383, 389 to 390 (NY), serine 408, and alanine 426.

The protein in the N-terminal section; belongs to the N-acetylglucosamine-1-phosphate uridyltransferase family. This sequence in the C-terminal section; belongs to the transferase hexapeptide repeat family. As to quaternary structure, homotrimer. It depends on Mg(2+) as a cofactor.

The protein localises to the cytoplasm. It carries out the reaction alpha-D-glucosamine 1-phosphate + acetyl-CoA = N-acetyl-alpha-D-glucosamine 1-phosphate + CoA + H(+). The enzyme catalyses N-acetyl-alpha-D-glucosamine 1-phosphate + UTP + H(+) = UDP-N-acetyl-alpha-D-glucosamine + diphosphate. It participates in nucleotide-sugar biosynthesis; UDP-N-acetyl-alpha-D-glucosamine biosynthesis; N-acetyl-alpha-D-glucosamine 1-phosphate from alpha-D-glucosamine 6-phosphate (route II): step 2/2. The protein operates within nucleotide-sugar biosynthesis; UDP-N-acetyl-alpha-D-glucosamine biosynthesis; UDP-N-acetyl-alpha-D-glucosamine from N-acetyl-alpha-D-glucosamine 1-phosphate: step 1/1. It functions in the pathway bacterial outer membrane biogenesis; LPS lipid A biosynthesis. Catalyzes the last two sequential reactions in the de novo biosynthetic pathway for UDP-N-acetylglucosamine (UDP-GlcNAc). The C-terminal domain catalyzes the transfer of acetyl group from acetyl coenzyme A to glucosamine-1-phosphate (GlcN-1-P) to produce N-acetylglucosamine-1-phosphate (GlcNAc-1-P), which is converted into UDP-GlcNAc by the transfer of uridine 5-monophosphate (from uridine 5-triphosphate), a reaction catalyzed by the N-terminal domain. This chain is Bifunctional protein GlmU, found in Legionella pneumophila (strain Paris).